We begin with the raw amino-acid sequence, 587 residues long: Folylpolyglutamate synthase, mitochondrial (587 aa).

The N-terminal 42 residues, 1-42 (MSWARTHLRSALSLAAVSARGATTEGAARRWLSAWPAPQEPG), are a transit peptide targeting the mitochondrion. Residue 106–109 (GKGS) coordinates ATP. Residues serine 130, glutamate 200, and histidine 228 each coordinate Mg(2+). ATP is bound by residues arginine 363 and aspartate 377. The segment at 484–508 (PDFLSSPSPEPGRPGSLQPALRPPH) is disordered. Serine 539 is subject to Phosphoserine.

It belongs to the folylpolyglutamate synthase family. In terms of assembly, monomer. A monovalent cation is required as a cofactor.

It localises to the mitochondrion inner membrane. Its subcellular location is the mitochondrion matrix. It is found in the cytoplasm. It catalyses the reaction (6S)-5,6,7,8-tetrahydrofolyl-(gamma-L-Glu)(n) + L-glutamate + ATP = (6S)-5,6,7,8-tetrahydrofolyl-(gamma-L-Glu)(n+1) + ADP + phosphate + H(+). The protein operates within cofactor biosynthesis; tetrahydrofolylpolyglutamate biosynthesis. Catalyzes conversion of folates to polyglutamate derivatives allowing concentration of folate compounds in the cell and the intracellular retention of these cofactors, which are important substrates for most of the folate-dependent enzymes that are involved in one-carbon transfer reactions involved in purine, pyrimidine and amino acid synthesis. This is Folylpolyglutamate synthase, mitochondrial (FPGS) from Cricetulus griseus (Chinese hamster).